The primary structure comprises 638 residues: Methylmalonyl-CoA mutase small subunit (638 aa).

The segment covering 1–11 (MSSTDQGTNPA) has biased composition (polar residues). The interval 1-34 (MSSTDQGTNPADTDDLTPTTLSLAGDFPKATEEQ) is disordered.

The protein belongs to the methylmalonyl-CoA mutase family. In terms of assembly, heterodimer of an alpha and a beta chain. Requires adenosylcob(III)alamin as cofactor.

The catalysed reaction is (R)-methylmalonyl-CoA = succinyl-CoA. The protein operates within metabolic intermediate metabolism; propanoyl-CoA degradation; succinyl-CoA from propanoyl-CoA: step 3/3. Its function is as follows. Catalyzes the isomerization of succinyl-CoA to methylmalonyl-CoA during synthesis of propionate from tricarboxylic acid-cycle intermediates. This is Methylmalonyl-CoA mutase small subunit (mutA) from Propionibacterium freudenreichii subsp. shermanii.